Reading from the N-terminus, the 192-residue chain is Xanthine phosphoribosyltransferase (192 aa).

Xanthine contacts are provided by Leu20 and Asn27. 128–132 is a 5-phospho-alpha-D-ribose 1-diphosphate binding site; that stretch reads ANGDA. Lys156 is a binding site for xanthine.

This sequence belongs to the purine/pyrimidine phosphoribosyltransferase family. Xpt subfamily. In terms of assembly, homodimer.

Its subcellular location is the cytoplasm. The catalysed reaction is XMP + diphosphate = xanthine + 5-phospho-alpha-D-ribose 1-diphosphate. Its pathway is purine metabolism; XMP biosynthesis via salvage pathway; XMP from xanthine: step 1/1. In terms of biological role, converts the preformed base xanthine, a product of nucleic acid breakdown, to xanthosine 5'-monophosphate (XMP), so it can be reused for RNA or DNA synthesis. This is Xanthine phosphoribosyltransferase from Staphylococcus aureus (strain bovine RF122 / ET3-1).